The chain runs to 1278 residues: MTLTERLREKISQAFYNHGLFCASYPIPIILFTGLCILACCYPLLKLPLPGTGPVEFTTPVKDYSPPPLTSDHKPGEPNEQPEWYVGAPVAYIQQIFVKSSVSPWHKNLLAVDVFRSPLSRAFQLVEEIRNHVLKDSSGTRSLEDVCLQVTDLLPGLRKLRNLLPEHGCLLLSPGNFWQNDRERFHADPDIIRTIHQHEPKTLQTSATLKDLLFGVPGKYSGVSLYTRKRLVSYTITLVFQHYHAKFLGSLRARLMLLHPSPNCSLRAESLVHVHFKEEIGIAELIPLVTTYIILFAYIYFSTRKIDMVKSKWGLALAAVVTVLSSLLMSVGLCTLFGLTPTLNGGEIFPYLVVVIGLENVLVLTKSVVSTPVDLEVKLRIAQGLSSESWSIMKNMATELGIVLIGYFTLVPAIQEFCLFAVVGLVSDFFLQMLFFTTVLSIDIRRMELADLNKRLPPEACLPPAKPVGRPTRFERQPTVRPSMPHTITLQPSSFRNLRLPKRLRVIYFLARTRLAQRLIMAGTVVWIGILVYTDPAGLRTYLAAQVTEQSPLGEGALAPLPVPSGVLPASHPDPAFSIFPPDASKLPENQTLPGEPPEPGGLAEGVHDSPAPEVTWGPEDEELWRKLSFRHWPTLFSYYNITLAKRYVSLLPVIPVTLRLNPREALEGRHPQDGRSAWPPPRPGQGGLWEAGPKGPGTAQAQRDLTLYKVAALGLASGIVLVLLLLCLYRVLCPRNYGQPGAGPGRRRRGELPCDDYGYAPPETEIVPLVLRGHLMDIECLASDGMLLVSCCLAGHVCVWDAQTGDCLTRIPHPGQRRDSGVGSGLETQETWERLSDGGKGGPEEPGDSPPLRHRPRGPPPPALFGDQPDLTCLIDTNFSARPQLPEPAQPEPRYRAGRRAQDSAGYDFSRLVQRVYQEGGMAPVHTPALRPPSPGPTFPLAPEDEAGFPPEKSCPSLAWAPSTDGSIWSLELQGSLIVVGRSSGRLEVWDAIEGTLRCSSEEVSSGITALVFLDRRIVAARLNGSLDFFSLETHTALSPLQFRGAPGRGSSPASPACSSSDRVACHLTHTVPCAHQKPITALKAAAGRLVTGSQDHTLRVFRLEDSCCLFTLQGHSGAITTVYIDQTMVLASGGQDGAICLWDVLTGSRVSHMFAHRGDVTSLTCTTSCVISSGLDDLISIWDRSTGIKLYSIQQDLGCGASLGVISDNLLVTGGQGCVSFWDLNYGDLLQTVYLGKNSEAQPARQILVLDNAAIVCNFGSELSLVYVPSVLEKLD.

Over 1–18 the chain is Cytoplasmic; the sequence is MTLTERLREKISQAFYNH. A helical transmembrane segment spans residues 19 to 39; sequence GLFCASYPIPIILFTGLCILA. Residues 40-279 lie on the Lumenal side of the membrane; sequence CCYPLLKLPL…SLVHVHFKEE (240 aa). Residues 46–284 are loop-1; the sequence is KLPLPGTGPV…HFKEEIGIAE (239 aa). The segment at 60–80 is disordered; that stretch reads PVKDYSPPPLTSDHKPGEPNE. Asparagine 263 carries an N-linked (GlcNAc...) asparagine glycan. A helical membrane pass occupies residues 280–300; it reads IGIAELIPLVTTYIILFAYIY. Residues 284 to 442 enclose the SSD domain; sequence ELIPLVTTYI…MLFFTTVLSI (159 aa). The Cytoplasmic segment spans residues 301 to 312; sequence FSTRKIDMVKSK. The chain crosses the membrane as a helical span at residues 313 to 333; that stretch reads WGLALAAVVTVLSSLLMSVGL. Topologically, residues 334 to 344 are lumenal; sequence CTLFGLTPTLN. A helical transmembrane segment spans residues 345–365; the sequence is GGEIFPYLVVVIGLENVLVLT. Residues 366–401 are Cytoplasmic-facing; that stretch reads KSVVSTPVDLEVKLRIAQGLSSESWSIMKNMATELG. The chain crosses the membrane as a helical span at residues 402–422; it reads IVLIGYFTLVPAIQEFCLFAV. Position 423 (valine 423) is a topological domain, lumenal. A helical transmembrane segment spans residues 424–444; that stretch reads GLVSDFFLQMLFFTTVLSIDI. Topologically, residues 445-518 are cytoplasmic; sequence RRMELADLNK…FLARTRLAQR (74 aa). An ER export signal motif is present at residues 447-452; it reads MELADL. Glycyl lysine isopeptide (Lys-Gly) (interchain with G-Cter in ubiquitin) cross-links involve residues lysine 454 and lysine 466. The helical transmembrane segment at 519 to 539 threads the bilayer; sequence LIMAGTVVWIGILVYTDPAGL. The interval 535–710 is loop-7; that stretch reads DPAGLRTYLA…QAQRDLTLYK (176 aa). The Lumenal portion of the chain corresponds to 540–707; that stretch reads RTYLAAQVTE…GTAQAQRDLT (168 aa). Positions 581-618 are disordered; the sequence is PPDASKLPENQTLPGEPPEPGGLAEGVHDSPAPEVTWG. 2 N-linked (GlcNAc...) asparagine glycosylation sites follow: asparagine 590 and asparagine 641. A disordered region spans residues 668–696; sequence EGRHPQDGRSAWPPPRPGQGGLWEAGPKG. Residues 708–728 traverse the membrane as a helical segment; sequence LYKVAALGLASGIVLVLLLLC. Topologically, residues 729–1278 are cytoplasmic; sequence LYRVLCPRNY…YVPSVLEKLD (550 aa). The interaction with SREBF2 stretch occupies residues 731 to 1278; the sequence is RVLCPRNYGQ…YVPSVLEKLD (548 aa). The WD 1 repeat unit spans residues 771–811; sequence VLRGHLMDIECLASDGMLLVSCCLAGHVCVWDAQTGDCLTR. Serine 821, serine 837, serine 850, serine 905, and serine 935 each carry phosphoserine. The interval 834–904 is disordered; it reads ERLSDGGKGG…RYRAGRRAQD (71 aa). WD repeat units follow at residues 951-1001 and 1004-1041; these read PPEK…LRCS and EVSS…ALSP. Position 1050 is an omega-N-methylarginine (arginine 1050). WD repeat units lie at residues 1076 to 1113, 1116 to 1154, 1157 to 1194, and 1196 to 1234; these read AHQK…CLFT, GHSG…RVSH, AHRG…KLYS, and QQDL…LLQT.

Belongs to the WD repeat SCAP family. Membrane region forms a homotetramer. Component of the SCAP-SREBP complex (composed of SCAP and SREBF1/SREBP1 or SREBF2/SREBP2); interacts with SREBF1/SREBP1 or SREBF2/SREBP2 through its C-terminal cytoplasmic domain. Forms a ternary complex with INSIG1 or INSIG2 through its transmembrane domains at high sterol concentrations. Interacts with PAQR3; the interaction anchors the SCAP-SREBP complex to the Golgi apparatus in low cholesterol conditions. Interacts with the SEC23-SEC24 complex in a SAR1-GTP-dependent manner through an ER export signal in its third cytoplasmic loop. Interacts with RNF139; the interaction inhibits the interaction of SCAP with SEC24B and hampering the ER to Golgi transport of the SCAP-SREBP complex. Interacts with SPRING1. In terms of processing, ubiquitinated at Lys-454 and Lys-466. RNF145 triggers ubiquitination of SCAP, likely inhibiting SCAP-SREBP complex transport to the Golgi apparatus and the subsequent processing/maturation of SREBF2/SREBP2.

The protein resides in the endoplasmic reticulum membrane. It is found in the golgi apparatus membrane. It localises to the cytoplasmic vesicle. Its subcellular location is the COPII-coated vesicle membrane. Its function is as follows. Escort protein required for cholesterol as well as lipid homeostasis. Regulates export of the SCAP-SREBP complex from the endoplasmic reticulum to the Golgi upon low cholesterol, thereby regulating the processing of sterol regulatory element-binding proteins (SREBPs) SREBF1/SREBP1 and SREBF2/SREBP2. At high sterol concentrations, formation of a ternary complex with INSIG (INSIG1 or INSIG2) leads to mask the ER export signal in SCAP, promoting retention of the complex in the endoplasmic reticulum. Low sterol concentrations trigger release of INSIG, a conformational change in the SSD domain of SCAP, unmasking of the ER export signal, promoting recruitment into COPII-coated vesicles and transport of the SCAP-SREBP to the Golgi: in the Golgi, SREBPs are then processed, releasing the transcription factor fragment of SREBPs from the membrane, its import into the nucleus and up-regulation of LDLR, INSIG1 and the mevalonate pathway. Binds cholesterol via its SSD domain. This is Sterol regulatory element-binding protein cleavage-activating protein from Bos taurus (Bovine).